Reading from the N-terminus, the 142-residue chain is Dynein light chain Tctex-type protein 2B (142 aa).

This sequence belongs to the dynein light chain Tctex-type family. In terms of assembly, light chain of the cytoplasmic dynein complex 2, a multisubunit complex composed at least of eleven different proteins. The cytoplasmic dynein 2 complex consists of two catalytic heavy chains (HCs) and a number of non-catalytic subunits presented by intermediate chains (ICs), light intermediate chains (LICs) and light chains (LCs). Among them, a heavy chain (DYNC2H1), two intermediate chains (DYNC2I2 and DYNC2I1), a light intermediate chain (DYNC2LI1), and a light chain (DYNLT2B) are unique to the dynein-2 complex, but a subset of the light chains are also shared by dynein-1 and dynein-2 complexes. Interacts with DYNC2I1. The dimer DYNLT2B-DYNLT1/DYNLT3 interacts with DYNC2I1; this interaction is crucial for retrograde trafficking of ciliary proteins.

It localises to the dynein axonemal particle. Functionally, acts as one of several non-catalytic accessory components of the cytoplasmic dynein 2 complex (dynein-2 complex), a motor protein complex that drives the movement of cargos along microtubules within cilia and flagella in concert with the intraflagellar transport (IFT) system. Required for proper retrograde ciliary transport. This is Dynein light chain Tctex-type protein 2B from Homo sapiens (Human).